A 387-amino-acid polypeptide reads, in one-letter code: 1,3-propanediol dehydrogenase (387 aa).

The protein belongs to the iron-containing alcohol dehydrogenase family. Homooctamer. It depends on Fe cation as a cofactor.

The enzyme catalyses propane-1,3-diol + NAD(+) = 3-hydroxypropanal + NADH + H(+). Its activity is regulated as follows. Inhibited by the metal chelator 1,10-phenanthroline. Its function is as follows. Catalyzes the reduction of 3-hydroxypropanal. Is considerably less active with glyceraldehyde, propionaldehyde, acetaldehyde, and butyraldehyde. Also catalyzes the oxidation of various primary, secondary, and tertiary alcohols. Is most active with substrates containing two primary alcohol groups separated by one or two carbon atoms. 1,3-propanediol is the preferred substrate. The sequence is that of 1,3-propanediol dehydrogenase from Citrobacter freundii.